The primary structure comprises 284 residues: 2-dehydro-3-deoxyphosphooctonate aldolase (284 aa).

Belongs to the KdsA family.

It localises to the cytoplasm. It catalyses the reaction D-arabinose 5-phosphate + phosphoenolpyruvate + H2O = 3-deoxy-alpha-D-manno-2-octulosonate-8-phosphate + phosphate. The protein operates within carbohydrate biosynthesis; 3-deoxy-D-manno-octulosonate biosynthesis; 3-deoxy-D-manno-octulosonate from D-ribulose 5-phosphate: step 2/3. It participates in bacterial outer membrane biogenesis; lipopolysaccharide biosynthesis. The protein is 2-dehydro-3-deoxyphosphooctonate aldolase of Burkholderia mallei (strain NCTC 10247).